The following is an 867-amino-acid chain: Coiled-coil domain-containing protein 178 (867 aa).

Coiled-coil stretches lie at residues 153-204 (DEKC…KIDS), 233-414 (WHLE…ENQY), 445-470 (ACTK…TNES), and 662-696 (MIFY…KNKF).

In Homo sapiens (Human), this protein is Coiled-coil domain-containing protein 178 (CCDC178).